The chain runs to 1845 residues: MGTGFARGARGTAASGPGGGFLFAWILVSFTCHLASTQGAPEDVDVLQRLGLSWTKAGGGRSPTPPGVIPFPSGFIFTQRAKLQAPTANVLPTTLGRELALVLSLCSHRVNHAFLFAIRSRKHKLQLGLQFLPGRTIIHLGPRQSVAFDLDVHDGRWHHLALELRGRTVTMVTACGQHRVPVPLPSRRDSMLDPQGSFLLGKVNPRAVQFEGALCQFSIHPVAQVAHNYCAHLRERCRQVDTYSPQVGTLFPWDSGPAFALHPEPALLGLGNLTRTPATLGARPVSRALAVTLAPAMPTKPLRTVHPDVSEHSSSQTPLSPAKQSARKTPSPSSSASLANSTRVYRPAAAQPRQITTTSPTKRSPTKPSVSPLSVTPMKSPHATQKTGVPSFTKPVPPTQKPAPFTSYLAPSKASSPTVRPVQKTFMTPRPPVPSPQPLRPTTGLSKKFTNPTVAKSKSKTTSWASKPVLARSSVPKTLQQTVLSQSPVSYLGSQTLAPALPPLGVGNPRTMPPTRDSALTPAGSKKFTGRETSKKTRQKSSPRKPEPLSPGKSARDASPRDLTTKPSRPSTPALVLAPAYLLSSSPQPTSSSFPFFHLLGPTPFPMLMGPPGSKGDCGLPGPPGLPGLPGSPGARGPRGPPGPYGNPGPPGPPGAKGQKGDPGLSPGQAHDGAKGNMGLPGLSGNPGPLGRKGHKGHPGAAGHPGEQGQPGPEGSPGAKGYPGRQGFPGPVGDPGPKGSRGYIGLPGLFGLPGSDGERGLPGVPGKRGEMGRPGFPGDFGERGPPGLDGNPGEIGLPGPPGVLGLIGDTGALGPVGYPGPKGMKGLMGGVGEPGLKGDKGEQGVPGVSGDPGFQGDKGSHGLPGLPGGRGKPGPLGKAGDKGSLGFPGPPGPEGFPGDIGPPGDNGPEGMKGKPGARGLPGPPGQLGPEGDEGPMGPPGVPGLEGQPGRKGFPGRPGLDGSKGEPGDPGRPGPVGEQGLMGFIGLVGEPGIVGEKGDRGVMGPPGAPGPKGSMGHPGTPGGIGNPGEPGPWGPPGSRGLPGMRGAKGHRGPRGPDGPAGEQGSKGLKGRVGPRGRPGQPGQQGAAGERGHSGAKGFLGIPGPSGPPGAKGLPGEPGSQGPQGPVGPPGEMGPKGPPGAVGEPGLPGDSGMKGDLGPLGPPGEQGLIGQRGEPGLEGDHGPVGPDGLKGDRGDPGPDGEHGEKGQEGLKGEDGSPGPPGITGVPGREGKPGKQGEKGQRGAKGAKGHQGYLGEMGIPGEPGPPGTPGPKGSRGTLGPTGAPGRMGAQGEPGLAGYNGHKGITGPLGPPGPKGEKGDQGEDGKTEGPPGPPGDRGPVGDRGDRGEPGDPGYPGQEGVQGLRGEPGQQGQPGHPGPRGRPGPKGSKGEEGPKGKPGKAGPSGRRGTQGLQGLPGPRGVVGRQGPEGTAGSDGIPGRDGRPGYQGDQGNDGDPGPVGPAGRRGNPGVAGLPGAQGPPGFKGESGLPGQLGPPGKRGTEGGTGLPGNQGEPGSKGQPGDSGEMGFPGVAGLFGPKGPPGDIGFKGIQGPRGPPGLMGKEGIIGPPGMLGPSGLPGPKGDRGSRGDLGLQGPRGPPGPRGRPGPPGPPWHPIQFQQDDLGAAFQTWMDAQGAVRSEGYSYPDQLALDQGGEIFKTLHYLSNLIQSIKTPLGTKENPARVCRDLMDCEQRMADGTYWVDPNLGCSSDTIEVSCNFTQGGQTCLKPITASKAEFAVSRVQMNFLHLLSSEGTQHITIHCLNMTVWQEGPGRSSARQAVRFRAWNGQVFEAGGQFRPEVSMDGCKVHDGRWHQTLFTFRTQDPQQLPIVSVDNLPPVSSGKQYRLEVGPACFL.

The N-terminal stretch at methionine 1–glycine 39 is a signal peptide. Residues alanine 40–methionine 609 constitute a propeptide, N-terminal propeptide. Positions proline 72–cysteine 237 constitute a Laminin G-like domain. N-linked (GlcNAc...) asparagine glycosylation is present at asparagine 272. 4 disordered regions span residues threonine 299–threonine 478, proline 502–threonine 572, leucine 608–proline 774, and leucine 827–glutamine 1608. The segment covering histidine 312–lysine 323 has biased composition (polar residues). Low complexity-rich tracts occupy residues arginine 327–arginine 343 and threonine 356–proline 372. N-linked (GlcNAc...) asparagine glycosylation occurs at asparagine 340. A compositionally biased stretch (pro residues) spans proline 429–leucine 439. Over residues glycine 444–valine 454 the composition is skewed to polar residues. The span at serine 554–threonine 564 shows a compositional bias: basic and acidic residues. 11 consecutive Collagen-like domains span residues glycine 610–glycine 664, glycine 673–valine 732, glycine 742–proline 801, glycine 817–leucine 876, glycine 877–methionine 936, glycine 937–lysine 996, glycine 997–arginine 1038, glycine 1039–glycine 1096, glycine 1117–glutamate 1176, glycine 1177–lysine 1236, and glycine 1240–lysine 1299. Residues glycine 610 to proline 1603 are triple-helical. The span at arginine 639–proline 654 shows a compositional bias: pro residues. Composition is skewed to low complexity over residues asparagine 677–leucine 690 and proline 699–alanine 719. A compositionally biased stretch (gly residues) spans glycine 865–glycine 874. Residues phenylalanine 896–glutamate 909 are compositionally biased toward low complexity. The span at glycine 1018–glycine 1027 shows a compositional bias: gly residues. 3 stretches are compositionally biased toward low complexity: residues arginine 1074–alanine 1086, leucine 1112–glutamine 1122, and lysine 1152–isoleucine 1167. 2 stretches are compositionally biased toward basic and acidic residues: residues leucine 1187–aspartate 1212 and arginine 1226–glutamine 1238. Composition is skewed to basic and acidic residues over residues lysine 1311–threonine 1323 and proline 1335–proline 1345. Positions glycine 1325–lysine 1384 constitute a Collagen-like 12 domain. 3 stretches are compositionally biased toward low complexity: residues arginine 1360–proline 1369, lysine 1395–proline 1422, and proline 1438–alanine 1465. Collagen-like domains follow at residues glycine 1424–proline 1483, glycine 1484–glutamine 1543, and glycine 1544–proline 1603. A compositionally biased stretch (low complexity) spans isoleucine 1557–proline 1572. Over residues arginine 1588–histidine 1605 the composition is skewed to pro residues. Positions isoleucine 1607–leucine 1845 are cleaved as a propeptide — C-terminal propeptide. A Fibrillar collagen NC1 domain is found at glycine 1645–leucine 1845. 3 cysteine pairs are disulfide-bonded: cysteine 1675–cysteine 1707, cysteine 1716–cysteine 1843, and cysteine 1752–cysteine 1796. The Ca(2+) site is built by aspartate 1693, asparagine 1695, cysteine 1698, and aspartate 1701. Residue asparagine 1754 is glycosylated (N-linked (GlcNAc...) asparagine).

The protein belongs to the fibrillar collagen family. Highly expressed in cartilage, eye and ear.

The protein resides in the secreted. The protein localises to the extracellular space. It localises to the extracellular matrix. Functionally, plays a role during the calcification of cartilage and the transition of cartilage to bone. This is Collagen alpha-1(XXVII) chain (Col27a1) from Mus musculus (Mouse).